The following is a 257-amino-acid chain: Large ribosomal subunit protein uL2 (257 aa).

The tract at residues 207–231 (VEHPFGGGNHQHIGKPSTIRRDAPA) is disordered.

The protein belongs to the universal ribosomal protein uL2 family. Component of the large ribosomal subunit.

It localises to the cytoplasm. In terms of biological role, component of the large ribosomal subunit. The ribosome is a large ribonucleoprotein complex responsible for the synthesis of proteins in the cell. In Xenopus tropicalis (Western clawed frog), this protein is Large ribosomal subunit protein uL2 (rpl8).